The sequence spans 112 residues: Divalent-cation tolerance protein CutA (112 aa).

Residues Cys-16, His-83, and His-84 each coordinate Cu cation.

The protein belongs to the CutA family. Homotrimer. The cofactor is Cu cation.

Its subcellular location is the cytoplasm. Its function is as follows. Involved in resistance toward heavy metals. The polypeptide is Divalent-cation tolerance protein CutA (Escherichia coli O81 (strain ED1a)).